Reading from the N-terminus, the 162-residue chain is Large ribosomal subunit protein uL30 (162 aa).

It belongs to the universal ribosomal protein uL30 family. Part of the 50S ribosomal subunit.

This is Large ribosomal subunit protein uL30 from Korarchaeum cryptofilum (strain OPF8).